Here is a 224-residue protein sequence, read N- to C-terminus: 7-cyano-7-deazaguanine synthase (224 aa).

10-20 contacts ATP; it reads LSGGLDSATVV. Zn(2+)-binding residues include C189, C199, C202, and C205.

This sequence belongs to the QueC family. Zn(2+) serves as cofactor.

The catalysed reaction is 7-carboxy-7-deazaguanine + NH4(+) + ATP = 7-cyano-7-deazaguanine + ADP + phosphate + H2O + H(+). The protein operates within purine metabolism; 7-cyano-7-deazaguanine biosynthesis. Functionally, catalyzes the ATP-dependent conversion of 7-carboxy-7-deazaguanine (CDG) to 7-cyano-7-deazaguanine (preQ(0)). The polypeptide is 7-cyano-7-deazaguanine synthase (Ectopseudomonas mendocina (strain ymp) (Pseudomonas mendocina)).